The following is a 272-amino-acid chain: 1,4-dihydroxy-2-naphthoyl-CoA synthase (272 aa).

Residues Arg-33, 72–76, Tyr-84, 116–120, Thr-142, Ser-148, Tyr-245, and Lys-260 contribute to the substrate site; these read SGGDQ and YAIGG. 141–143 contributes to the hydrogencarbonate binding site; the sequence is QTG. The span at 253-264 shows a compositional bias: basic and acidic residues; it reads GRDAFKEKRDPD. Positions 253-272 are disordered; that stretch reads GRDAFKEKRDPDFDQFPKFP.

Belongs to the enoyl-CoA hydratase/isomerase family. MenB subfamily. Hydrogencarbonate serves as cofactor.

The catalysed reaction is 2-succinylbenzoyl-CoA + H(+) = 1,4-dihydroxy-2-naphthoyl-CoA + H2O. The protein operates within quinol/quinone metabolism; 1,4-dihydroxy-2-naphthoate biosynthesis; 1,4-dihydroxy-2-naphthoate from chorismate: step 6/7. Its pathway is quinol/quinone metabolism; menaquinone biosynthesis. Converts o-succinylbenzoyl-CoA (OSB-CoA) to 1,4-dihydroxy-2-naphthoyl-CoA (DHNA-CoA). The sequence is that of 1,4-dihydroxy-2-naphthoyl-CoA synthase from Staphylococcus haemolyticus (strain JCSC1435).